Here is a 225-residue protein sequence, read N- to C-terminus: Putative tyrosine-protein phosphatase OCA1 (225 aa).

Positions 1-11 are enriched in acidic residues; it reads MTDNCREDDDN. The segment at 1–24 is disordered; it reads MTDNCREDDDNLGTSGDNALSAPT. Polar residues predominate over residues 12–24; it reads LGTSGDNALSAPT. Residues 42–196 form the Tyrosine-protein phosphatase domain; that stretch reads NFCPVERYLY…FDTKSVTIDK (155 aa). Residue Cys-138 is the Phosphocysteine intermediate of the active site.

It belongs to the protein-tyrosine phosphatase family.

The protein resides in the cytoplasm. It carries out the reaction O-phospho-L-tyrosyl-[protein] + H2O = L-tyrosyl-[protein] + phosphate. In terms of biological role, putative tyrosine-protein phosphatase required for protection against superoxide stress. The sequence is that of Putative tyrosine-protein phosphatase OCA1 (OCA1) from Eremothecium gossypii (strain ATCC 10895 / CBS 109.51 / FGSC 9923 / NRRL Y-1056) (Yeast).